The primary structure comprises 172 residues: HTH-type transcriptional regulator IscR (172 aa).

Residues 2-131 (RLTSKGRYAV…NNITLGELMR (130 aa)) enclose the HTH rrf2-type domain. A DNA-binding region (H-T-H motif) is located at residues 28 to 51 (LADISERQGISLSYLEQLFSRLRK). Positions 92, 98, and 104 each coordinate [2Fe-2S] cluster.

[2Fe-2S] cluster serves as cofactor.

Its function is as follows. Regulates the transcription of several operons and genes involved in the biogenesis of Fe-S clusters and Fe-S-containing proteins. The sequence is that of HTH-type transcriptional regulator IscR from Photobacterium profundum (strain SS9).